A 513-amino-acid chain; its full sequence is Butyrophilin subfamily 3 member A1 (513 aa).

Positions 1–29 (MKMASFLAFLLLNFRVCLLLLQLLMPHSA) are cleaved as a signal peptide. 2 Ig-like V-type domains span residues 30 to 139 (QFSV…KALV) and 145 to 236 (ALGS…ASIS). The Extracellular segment spans residues 30–254 (QFSVLGPSGP…AQRWIAALAG (225 aa)). 2 disulfides stabilise this stretch: Cys-52–Cys-126 and Cys-166–Cys-220. Asn-115 is a glycosylation site (N-linked (GlcNAc...) asparagine). The helical transmembrane segment at 255-271 (TLPVLLLLLGGAGYFLW) threads the bilayer. The Cytoplasmic portion of the chain corresponds to 272 to 513 (QQQEEKKTQF…EPTALTICPA (242 aa)). A B30.2/SPRY domain is found at 322–513 (RGERHSAYNE…EPTALTICPA (192 aa)).

Belongs to the immunoglobulin superfamily. BTN/MOG family. Homodimer. Post-translationally, N-glycosylated. As to expression, detected on T-cells, natural killer cells, dendritic cells and macrophages (at protein level). Ubiquitous. Highly expressed in heart, pancreas and lung, Moderately expressed in placenta, liver and muscle.

Its subcellular location is the cell membrane. In terms of biological role, plays a role in T-cell activation and in the adaptive immune response. Regulates the proliferation of activated T-cells. Regulates the release of cytokines and IFNG by activated T-cells. Mediates the response of T-cells toward infected and transformed cells that are characterized by high levels of phosphorylated metabolites, such as isopentenyl pyrophosphate. The protein is Butyrophilin subfamily 3 member A1 (BTN3A1) of Homo sapiens (Human).